Reading from the N-terminus, the 600-residue chain is Aspartate--tRNA(Asp/Asn) ligase (600 aa).

Residue Glu-174 coordinates L-aspartate. The tract at residues 198 to 201 is aspartate; the sequence is QLFK. Arg-220 contributes to the L-aspartate binding site. Residues 220–222 and Gln-229 contribute to the ATP site; that span reads RDE. His-457 is a binding site for L-aspartate. Glu-491 serves as a coordination point for ATP. An L-aspartate-binding site is contributed by Arg-498. 543–546 contributes to the ATP binding site; sequence GLDR.

The protein belongs to the class-II aminoacyl-tRNA synthetase family. Type 1 subfamily. In terms of assembly, homodimer.

The protein localises to the cytoplasm. The enzyme catalyses tRNA(Asx) + L-aspartate + ATP = L-aspartyl-tRNA(Asx) + AMP + diphosphate. Its function is as follows. Aspartyl-tRNA synthetase with relaxed tRNA specificity since it is able to aspartylate not only its cognate tRNA(Asp) but also tRNA(Asn). Reaction proceeds in two steps: L-aspartate is first activated by ATP to form Asp-AMP and then transferred to the acceptor end of tRNA(Asp/Asn). The protein is Aspartate--tRNA(Asp/Asn) ligase of Burkholderia mallei (strain NCTC 10247).